The chain runs to 495 residues: IQ domain-containing protein IQM5 (495 aa).

Residues 89-122 (ENRGGEEEDERGSSPKRRNRGNLTALSLPAPTPF) form a disordered region. The IQ domain occupies 131–160 (LDAAAVTLQKVYKSYRTRRNLADCAVVVEE).

In terms of tissue distribution, expressed in roots, rosette and cauline leaves, and at lower levels in stems, flowers and siliques.

It is found in the cytoplasm. The protein localises to the nucleus. In terms of biological role, may be involved in biotic and abiotic stress responses. In Arabidopsis thaliana (Mouse-ear cress), this protein is IQ domain-containing protein IQM5.